A 246-amino-acid chain; its full sequence is 3-deoxy-manno-octulosonate cytidylyltransferase (246 aa).

It belongs to the KdsB family.

Its subcellular location is the cytoplasm. It carries out the reaction 3-deoxy-alpha-D-manno-oct-2-ulosonate + CTP = CMP-3-deoxy-beta-D-manno-octulosonate + diphosphate. It functions in the pathway nucleotide-sugar biosynthesis; CMP-3-deoxy-D-manno-octulosonate biosynthesis; CMP-3-deoxy-D-manno-octulosonate from 3-deoxy-D-manno-octulosonate and CTP: step 1/1. It participates in bacterial outer membrane biogenesis; lipopolysaccharide biosynthesis. Activates KDO (a required 8-carbon sugar) for incorporation into bacterial lipopolysaccharide in Gram-negative bacteria. This is 3-deoxy-manno-octulosonate cytidylyltransferase from Rickettsia conorii (strain ATCC VR-613 / Malish 7).